The sequence spans 398 residues: Chalcone synthase 1 (398 aa).

Residue cysteine 167 is part of the active site.

Belongs to the thiolase-like superfamily. Chalcone/stilbene synthases family.

The enzyme catalyses (E)-4-coumaroyl-CoA + 3 malonyl-CoA + 3 H(+) = 2',4,4',6'-tetrahydroxychalcone + 3 CO2 + 4 CoA. It functions in the pathway secondary metabolite biosynthesis; flavonoid biosynthesis. Its function is as follows. The primary product of this enzyme is 4,2',4',6'-tetrahydroxychalcone (also termed naringenin-chalcone or chalcone) which can under specific conditions spontaneously isomerize into naringenin. This chain is Chalcone synthase 1 (CHS1), found in Gerbera hybrida (Daisy).